The chain runs to 133 residues: Small ribosomal subunit protein uS9 (133 aa).

A compositionally biased stretch (basic and acidic residues) spans Gly-95 to Lys-113. The tract at residues Gly-95–Arg-133 is disordered. Over residues Lys-114–Arg-133 the composition is skewed to basic residues.

It belongs to the universal ribosomal protein uS9 family.

This Chlamydia felis (strain Fe/C-56) (Chlamydophila felis) protein is Small ribosomal subunit protein uS9.